The primary structure comprises 36 residues: Conotoxin Bt11.4 (36 aa).

Intrachain disulfides connect Cys-2–Cys-16, Cys-9–Cys-21, Cys-15–Cys-26, and Cys-20–Cys-33.

Belongs to the conotoxin I1 superfamily. As to expression, expressed by the venom duct.

Its subcellular location is the secreted. This chain is Conotoxin Bt11.4, found in Conus betulinus (Beech cone).